The primary structure comprises 105 residues: Large ribosomal subunit protein eL36 (105 aa).

Residue lysine 62 is modified to N6-acetyllysine.

This sequence belongs to the eukaryotic ribosomal protein eL36 family. Component of the large ribosomal subunit.

It localises to the cytoplasm. It is found in the cytosol. Functionally, component of the large ribosomal subunit. The ribosome is a large ribonucleoprotein complex responsible for the synthesis of proteins in the cell. The chain is Large ribosomal subunit protein eL36 (Rpl36) from Rattus norvegicus (Rat).